The following is a 443-amino-acid chain: Aklavinone 7-beta-L-rhodosaminyltransferase (443 aa).

A signal peptide spans Met-1–Ala-23.

Belongs to the glycosyltransferase 28 family.

The catalysed reaction is dTDP-beta-L-rhodosamine + aklavinone = aclacinomycin T + dTDP + 2 H(+). Its activity is regulated as follows. The activity of AknS is substantially increased by the addition of the accessory protein AknT. Involved in the biosynthesis of the anthracycline antitumor agent aclacinomycin A. Catalyzes the transfer of the proximal deoxyhexose, L-rhodosamine, from dTDP-beta-L-rhodosamine to the C7-OH of aklavinone aglycone to yield aclacinomycin T (rhodosaminyl-aklavinone). It can also use dTDP-2-deoxy-beta-L-fucose, TDP-2-deoxyfucose, dTDP-4-amino-2-deoxyrhamnose, TDP-L-rhodosamine as sugar donor and epsilon-rhodomycinone as sugar acceptor. In Streptomyces galilaeus, this protein is Aklavinone 7-beta-L-rhodosaminyltransferase.